The chain runs to 212 residues: Golgi SNAP receptor complex member 2 (212 aa).

Methionine 1 is subject to N-acetylmethionine. Residues 1–190 (MEPLYQQTHK…LIEKRAFQDK (190 aa)) are Cytoplasmic-facing. A coiled-coil region spans residues 61-107 (NRRQNAKLRVDQLKYDVQHLQTALRNFQHRRQAKEQQERQRDELLSR). The IxM motif; signal for cargo packaging into COPII-coated vesicles motif lies at 118 to 120 (IPM). The helical; Anchor for type IV membrane protein transmembrane segment at 191-211 (YFMIGGMLLTCAVMFLVVQYL) threads the bilayer. Threonine 212 is a topological domain (vesicular).

This sequence belongs to the GOSR2 family. Part of a unique SNARE complex composed of the Golgi SNAREs GOSR1, STX5 and YKT6. Interacts with BET1.

It is found in the golgi apparatus. The protein resides in the cis-Golgi network membrane. Its subcellular location is the golgi apparatus membrane. It localises to the endoplasmic reticulum membrane. Functionally, involved in transport of proteins from the cis/medial-Golgi to the trans-Golgi network. The chain is Golgi SNAP receptor complex member 2 (Gosr2) from Rattus norvegicus (Rat).